The following is a 398-amino-acid chain: Acetate kinase 1 (398 aa).

A Mg(2+)-binding site is contributed by Asn10. Lys17 contributes to the ATP binding site. Arg89 contacts substrate. Asp146 (proton donor/acceptor) is an active-site residue. Residues 206-210 (HLGNG), 281-283 (DCR), and 329-333 (GIGEN) contribute to the ATP site. Glu384 is a Mg(2+) binding site.

This sequence belongs to the acetokinase family. Homodimer. The cofactor is Mg(2+). Mn(2+) serves as cofactor.

Its subcellular location is the cytoplasm. It catalyses the reaction acetate + ATP = acetyl phosphate + ADP. The protein operates within metabolic intermediate biosynthesis; acetyl-CoA biosynthesis; acetyl-CoA from acetate: step 1/2. In terms of biological role, catalyzes the formation of acetyl phosphate from acetate and ATP. Can also catalyze the reverse reaction. The sequence is that of Acetate kinase 1 from Neisseria meningitidis serogroup A / serotype 4A (strain DSM 15465 / Z2491).